We begin with the raw amino-acid sequence, 622 residues long: UvrABC system protein C (622 aa).

In terms of domain architecture, GIY-YIG spans 13–92; it reads DKPGVYLMKN…IKENRPKYNV (80 aa). The 36-residue stretch at 205–240 folds into the UVR domain; the sequence is DELIKKIEEKMKRAAEKMDFEGAAHYRDQRQALLDI.

The protein belongs to the UvrC family. In terms of assembly, interacts with UvrB in an incision complex.

It is found in the cytoplasm. The UvrABC repair system catalyzes the recognition and processing of DNA lesions. UvrC both incises the 5' and 3' sides of the lesion. The N-terminal half is responsible for the 3' incision and the C-terminal half is responsible for the 5' incision. This is UvrABC system protein C from Alkaliphilus metalliredigens (strain QYMF).